The chain runs to 507 residues: Cytochrome P450 monooxygenase tpeC (507 aa).

The chain crosses the membrane as a helical span at residues 24–44; the sequence is TLAIALIVGFVILKAIYNVFF. Residue C449 participates in heme binding.

This sequence belongs to the cytochrome P450 family. Heme is required as a cofactor.

The protein localises to the membrane. It participates in secondary metabolite biosynthesis. Functionally, cytochrome P450 monooxygenase; part of the gene cluster that mediates the biosynthesis of polyesters containing 2,4-dihydroxy-6-(2-hydroxypropyl)benzoate and 3-hydroxybutyrate moieties, such as talapolyester G, 15G256beta and 15G256beta-2; as well as to oxidized derivatives such as 15G256alpha. The biosynthesis of the polyesters probably starts with the formation of the diketide 3-hydroxybutyryl-S-ACP catalyzed by the partially reducing polyketide synthase tpeA. The acceptance of 3-hydroxybutyryl by the non-reducing polyketide synthase tpeB would initiate further elongation and cyclization, catalyzed by KS and PT, respectively, to form 2,4-dihydroxy-6-(2-hydroxyn-propyl)benzoyl-S-ACP intermediate. The TE domain could catalyze lactonization at this step to yield 6-hydroxymellein as a derailment product. The polyesterification process maybe occurs when additional molecules of 3-hydroxybutyryl are transferred to tpeB. Following the first esterification step, an intramolecular cyclization catalyzed by the TE domain of tpeB would give talarodioxadione 1, whereas the ethyl esterification of talapolyester G perhaps happens spontaneously. Further oxidation by the cytochrome P450 monooxygenase tpeC then leads to the formation of oxidized derivatives. The chain is Cytochrome P450 monooxygenase tpeC from Talaromyces stipitatus (strain ATCC 10500 / CBS 375.48 / QM 6759 / NRRL 1006) (Penicillium stipitatum).